Reading from the N-terminus, the 234-residue chain is Phosphoglycolate phosphatase (234 aa).

Asp-13 acts as the Nucleophile in catalysis. Mg(2+) is bound by residues Asp-13, Asp-15, and Asp-175.

It belongs to the HAD-like hydrolase superfamily. CbbY/CbbZ/Gph/YieH family. As to quaternary structure, monomer. Mg(2+) is required as a cofactor. It depends on chloride as a cofactor.

The enzyme catalyses 2-phosphoglycolate + H2O = glycolate + phosphate. The protein operates within organic acid metabolism; glycolate biosynthesis; glycolate from 2-phosphoglycolate: step 1/1. Functionally, specifically catalyzes the dephosphorylation of 2-phosphoglycolate. Is involved in the dissimilation of the intracellular 2-phosphoglycolate formed during the DNA repair of 3'-phosphoglycolate ends, a major class of DNA lesions induced by oxidative stress. This chain is Phosphoglycolate phosphatase, found in Pectobacterium atrosepticum (strain SCRI 1043 / ATCC BAA-672) (Erwinia carotovora subsp. atroseptica).